A 327-amino-acid polypeptide reads, in one-letter code: Phenylalanine--tRNA ligase alpha subunit (327 aa).

Glutamate 252 provides a ligand contact to Mg(2+).

Belongs to the class-II aminoacyl-tRNA synthetase family. Phe-tRNA synthetase alpha subunit type 1 subfamily. Tetramer of two alpha and two beta subunits. The cofactor is Mg(2+).

It localises to the cytoplasm. It catalyses the reaction tRNA(Phe) + L-phenylalanine + ATP = L-phenylalanyl-tRNA(Phe) + AMP + diphosphate + H(+). This is Phenylalanine--tRNA ligase alpha subunit from Aeromonas hydrophila subsp. hydrophila (strain ATCC 7966 / DSM 30187 / BCRC 13018 / CCUG 14551 / JCM 1027 / KCTC 2358 / NCIMB 9240 / NCTC 8049).